A 37-amino-acid chain; its full sequence is Esculentin-2HSa (37 aa).

A disulfide bond links Cys-31 and Cys-37.

Expressed by the skin glands.

The protein resides in the secreted. Has antibacterial activity against the Gram-positive bacterium S.aureus ATCC 25923 (MIC=32 uM) and the Gram-negative bacterium E.coli ATCC 25726 (MIC=16 uM). The polypeptide is Esculentin-2HSa (Odorrana hosii (Hose's rock frog)).